The primary structure comprises 250 residues: NADH-quinone oxidoreductase subunit C (250 aa).

The tract at residues 193-250 (GMTPPLPGDEKADMPPIDDPMVTEGPEDTGAGARANAKAAEGTPADPPAMDDEEEDDA) is disordered. Over residues 222-236 (GAGARANAKAAEGTP) the composition is skewed to low complexity. Residues 241-250 (AMDDEEEDDA) show a composition bias toward acidic residues.

It belongs to the complex I 30 kDa subunit family. NDH-1 is composed of 14 different subunits. Subunits NuoB, C, D, E, F, and G constitute the peripheral sector of the complex.

It is found in the cell inner membrane. It catalyses the reaction a quinone + NADH + 5 H(+)(in) = a quinol + NAD(+) + 4 H(+)(out). Functionally, NDH-1 shuttles electrons from NADH, via FMN and iron-sulfur (Fe-S) centers, to quinones in the respiratory chain. The immediate electron acceptor for the enzyme in this species is believed to be ubiquinone. Couples the redox reaction to proton translocation (for every two electrons transferred, four hydrogen ions are translocated across the cytoplasmic membrane), and thus conserves the redox energy in a proton gradient. The chain is NADH-quinone oxidoreductase subunit C from Erythrobacter litoralis (strain HTCC2594).